A 227-amino-acid polypeptide reads, in one-letter code: UPF0758 protein Pcryo_2119 (227 aa).

One can recognise an MPN domain in the interval 102 to 224 (GLGRSQMVKD…TLSYAENSLP (123 aa)). Residues His173, His175, and Asp186 each contribute to the Zn(2+) site. The short motif at 173-186 (HNHPHTDAKPSTAD) is the JAMM motif element.

This sequence belongs to the UPF0758 family.

The polypeptide is UPF0758 protein Pcryo_2119 (Psychrobacter cryohalolentis (strain ATCC BAA-1226 / DSM 17306 / VKM B-2378 / K5)).